We begin with the raw amino-acid sequence, 314 residues long: Inactive protein FRIGIDA (314 aa).

Positions 1 to 18 are enriched in low complexity; sequence MSNYPPTVAAQPTTTANP. The interval 1 to 31 is disordered; sequence MSNYPPTVAAQPTTTANPLLQRHQSEQRRRE. A coiled-coil region spans residues 67–97; sequence VAVETFKRQFDDLQKHIESIENAIDSKLESN.

It belongs to the Frigida family.

The protein localises to the nucleus. This Arabidopsis thaliana (Mouse-ear cress) protein is Inactive protein FRIGIDA (FRI).